The following is a 152-amino-acid chain: MSLVIPEKFQHILRVLNTNIDGRRKIAFAITAIKGVGRRYAHVVLRKADIDLNKRAGELTEDEVERVVTIMQNPRQYKIPDWFLNRQKDIKDGKYSQVLANGLDNKLREDLERLKKIRAHRGLRHFWGLRVRGQHTKTTGRRGRTVGVSKKK.

It belongs to the universal ribosomal protein uS13 family. In terms of assembly, component of the small ribosomal subunit.

It is found in the cytoplasm. In terms of biological role, component of the small ribosomal subunit. The ribosome is a large ribonucleoprotein complex responsible for the synthesis of proteins in the cell. Plays an essential role in early embryonic development. This Danio rerio (Zebrafish) protein is Small ribosomal subunit protein uS13 (rps18).